Here is a 409-residue protein sequence, read N- to C-terminus: DNA primase small subunit (409 aa).

Active-site residues include glutamate 46, aspartate 111, and aspartate 113. The short motif at cysteine 123–cysteine 133 is the Zinc knuckle motif element.

The protein belongs to the eukaryotic-type primase small subunit family. DNA polymerase alpha:primase is a four subunit enzyme complex, which is assembled throughout the cell cycle, and consists of the two DNA polymerase subunits A POL1 and B POL12, and the DNA primase large PRI2 and small PRI1 subunits.

Its function is as follows. DNA primase is the polymerase that synthesizes small RNA primers for the Okazaki fragments made during discontinuous DNA replication. In a complex with DNA polymerase alpha (DNA polymerase alpha:primase) constitutes a replicative polymerase. Both primase components participate in formation of the active center, but the ATP-binding site is exclusively located on p48. The protein is DNA primase small subunit (PRI1) of Saccharomyces cerevisiae (strain ATCC 204508 / S288c) (Baker's yeast).